A 66-amino-acid polypeptide reads, in one-letter code: Putative transmembrane protein ORF66 (66 aa).

Residues 1-6 are Cytoplasmic-facing; that stretch reads MSDVDD. A helical membrane pass occupies residues 7-27; it reads TIVDSIAIVGAILIGIFLIVV. At 28 to 39 the chain is on the extracellular side; that stretch reads SVSNTSLFNNTE. The helical transmembrane segment at 40 to 60 threads the bilayer; it reads YDSMINSVLVIISSVIAYTLG. The Cytoplasmic portion of the chain corresponds to 61 to 66; the sequence is KRRSKS.

It localises to the host membrane. This Acidianus filamentous virus 2 (isolate Italy/Pozzuoli) (AFV-2) protein is Putative transmembrane protein ORF66.